Consider the following 492-residue polypeptide: Cytochrome P450 26A1 (492 aa).

Cys437 contacts heme.

The protein belongs to the cytochrome P450 family. Heme serves as cofactor.

It is found in the endoplasmic reticulum membrane. It localises to the microsome membrane. The enzyme catalyses all-trans-retinoate + reduced [NADPH--hemoprotein reductase] + O2 = all-trans-(4S)-hydroxyretinoate + oxidized [NADPH--hemoprotein reductase] + H2O + H(+). The catalysed reaction is all-trans-(4S)-hydroxyretinoate + reduced [NADPH--hemoprotein reductase] + O2 = all-trans-(4S,16)-dihydroxyretinoate + oxidized [NADPH--hemoprotein reductase] + H2O + H(+). It catalyses the reaction all-trans-retinoate + reduced [NADPH--hemoprotein reductase] + O2 = all-trans-18-hydroxyretinoate + oxidized [NADPH--hemoprotein reductase] + H2O + H(+). Its function is as follows. A cytochrome P450 monooxygenase involved in the metabolism of retinoates (RAs), the active metabolites of vitamin A, and critical signaling molecules in animals. RAs exist as at least four different isomers: all-trans-RA (atRA), 9-cis-RA, 13-cis-RA, and 9,13-dicis-RA, where atRA is considered to be the biologically active isomer, although 9-cis-RA and 13-cis-RA also have activity. Catalyzes the hydroxylation of atRA primarily at C-4 and C-18, thereby contributing to the regulation of atRA homeostasis and signaling. Hydroxylation of atRA limits its biological activity and initiates a degradative process leading to its eventual elimination. Involved in the convertion of atRA to all-trans-4-oxo-RA. Able to metabolize other RAs such as 9-cis, 13-cis and 9,13-di-cis RA. Can oxidize all-trans-13,14-dihydroretinoate (DRA) to metabolites which could include all-trans-4-oxo-DRA, all-trans-4-hydroxy-DRA, all-trans-5,8-epoxy-DRA, and all-trans-18-hydroxy-DRA. May play a role in the oxidative metabolism of xenobiotics such as tazarotenic acid. This chain is Cytochrome P450 26A1 (CYP26A1), found in Gallus gallus (Chicken).